Reading from the N-terminus, the 130-residue chain is Small ribosomal subunit protein uS9 (130 aa).

It belongs to the universal ribosomal protein uS9 family.

This chain is Small ribosomal subunit protein uS9, found in Bacillus mycoides (strain KBAB4) (Bacillus weihenstephanensis).